Consider the following 162-residue polypeptide: UPF0305 protein MMP0665 (162 aa).

The protein belongs to the UPF0305 family.

The protein is UPF0305 protein MMP0665 of Methanococcus maripaludis (strain DSM 14266 / JCM 13030 / NBRC 101832 / S2 / LL).